A 1757-amino-acid polypeptide reads, in one-letter code: Serine/threonine-protein kinase WNK3 (1757 aa).

The tract at residues 1–25 (MATDSGEPASTEDSEKPDGVSFENR) is disordered. Ser62 carries the post-translational modification Phosphoserine. Residues 66-82 (TEDDKVAESSRRDERKA) show a composition bias toward basic and acidic residues. The interval 66–85 (TEDDKVAESSRRDERKAATN) is disordered. One can recognise a Protein kinase domain in the interval 146-404 (LKFDIELGRG…IKDLLNHAFF (259 aa)). ATP-binding positions include 226–229 (TELM) and Lys276. Asp293 functions as the Proton acceptor in the catalytic mechanism. Phosphoserine; by autocatalysis is present on residues Ser303 and Ser307. The interaction with KLHL3 stretch occupies residues 536–546 (EYEETEVDQHV). Thr540 bears the Phosphothreonine mark. Composition is skewed to polar residues over residues 551–570 (LQGK…SSEP), 578–604 (SDTS…KLTQ), and 674–689 (SVKE…SGNG). Disordered stretches follow at residues 551–604 (LQGK…KLTQ) and 674–705 (SVKE…PRPE). At Ser1039 the chain carries Phosphoserine. The span at 1404–1422 (VATEKNVTSTTEVSVQSGS) shows a compositional bias: polar residues. Disordered stretches follow at residues 1404 to 1440 (VATE…QTCT), 1479 to 1498 (SLFY…EIED), and 1536 to 1574 (ATKD…MTHS). A compositionally biased stretch (low complexity) spans 1479–1491 (SLFYSPSSPMSSD). Phosphoserine occurs at positions 1550 and 1553. Residues 1555–1566 (RRPRSFKSKLRS) are compositionally biased toward basic residues. Ser1595 bears the Phosphoserine mark. Disordered regions lie at residues 1621–1650 (HFPS…CEST) and 1734–1757 (PGMN…PGPK). Positions 1624 to 1637 (SKPSLNQLKQSQQK) are enriched in low complexity. The span at 1641–1650 (ENWNKSCEST) shows a compositional bias: polar residues. Pro residues predominate over residues 1742 to 1757 (PAPPVQNPASIPPGPK).

It belongs to the protein kinase superfamily. Ser/Thr protein kinase family. WNK subfamily. As to quaternary structure, interacts with WNK1 and WNK4. Requires Mg(2+) as cofactor. In terms of processing, autophosphorylated at Ser-303 and Ser-307, promoting its activity. Phosphorylation at Thr-540 prevents interaction with KLHL3 and subsequent ubiquitination and degradation by the BCR(KLHL3) complex. Post-translationally, ubiquitinated by the BCR(KLHL2) complex, leading to its degradation. Ubiquitinated by the BCR(KLHL3) complex, leading to its degradation. As to expression, expressed in pancreatic duct.

The protein localises to the cytoplasm. It carries out the reaction L-seryl-[protein] + ATP = O-phospho-L-seryl-[protein] + ADP + H(+). It catalyses the reaction L-threonyl-[protein] + ATP = O-phospho-L-threonyl-[protein] + ADP + H(+). With respect to regulation, activated in response to hyperosmotic stress: cell shrinkage promotes formation of a membraneless compartment that concentrates WNK3 with its substrates, OXSR1/OSR1 and STK39/SPAK. Activation requires autophosphorylation of Ser-307 and, to a lower extent, Ser-303. Autophosphorylation and subsequent activation is inhibited by increases in intracellular ionic strength: Cl(-) potently inhibits WNK3 kinase activity via direct binding. Also inhibited by K(+) ions. Kinase activity is inhibited by WNK4. In terms of biological role, serine/threonine-protein kinase component of the WNK3-SPAK/OSR1 kinase cascade, which plays an important role in the regulation of electrolyte homeostasis and regulatory volume increase in response to hyperosmotic stress. WNK3 mediates regulatory volume increase in response to hyperosmotic stress by acting as a molecular crowding sensor, which senses cell shrinkage and mediates formation of a membraneless compartment by undergoing liquid-liquid phase separation. The membraneless compartment concentrates WNK3 with its substrates, OXSR1/OSR1 and STK39/SPAK, promoting WNK3-dependent phosphorylation and activation of downstream kinases OXSR1/OSR1 and STK39/SPAK. Following activation, OXSR1/OSR1 and STK39/SPAK catalyze phosphorylation of ion cotransporters SLC12A1/NKCC2, SLC12A2/NKCC1, SLC12A3/NCC, SLC12A4/KCC1, SLC12A5/KCC2 or SLC12A6/KCC3, regulating their activity. Phosphorylation of Na-K-Cl cotransporters SLC12A2/NKCC1 and SLC12A2/NKCC1 promote their activation and ion influx; simultaneously, phosphorylation of K-Cl cotransporters SLC12A4/KCC1, SLC12A5/KCC2 and SLC12A6/KCC3 inhibits its activity, blocking ion efflux. Phosphorylates WNK4, possibly regulating the activity of SLC12A3/NCC. May also phosphorylate NEDD4L. Also acts as a scaffold protein independently of its protein kinase activity: negatively regulates cell membrane localization of various transporters and channels, such as KCNJ1 and SLC26A9. Increases Ca(2+) influx mediated by TRPV5 and TRPV6 by enhancing their membrane expression level via a kinase-dependent pathway. This is Serine/threonine-protein kinase WNK3 from Mus musculus (Mouse).